A 335-amino-acid polypeptide reads, in one-letter code: DNA polymerase beta (335 aa).

A Glycyl lysine isopeptide (Lys-Gly) (interchain with G-Cter in ubiquitin) cross-link involves residue lysine 41. Lysine 60 lines the K(+) pocket. Residue lysine 60 participates in Na(+) binding. A Glycyl lysine isopeptide (Lys-Gly) (interchain with G-Cter in ubiquitin) cross-link involves residue lysine 61. K(+) contacts are provided by leucine 62 and valine 65. Leucine 62 and valine 65 together coordinate Na(+). Lysine 72 (nucleophile; Schiff-base intermediate with DNA; for 5'-dRP lyase activity) is an active-site residue. Residue lysine 72 is modified to N6-acetyllysine. A Glycyl lysine isopeptide (Lys-Gly) (interchain with G-Cter in ubiquitin) cross-link involves residue lysine 81. The residue at position 83 (arginine 83) is an Omega-N-methylarginine; by PRMT6. Threonine 101, valine 103, and isoleucine 106 together coordinate K(+). Positions 101, 103, and 106 each coordinate Na(+). Position 149 (arginine 149) interacts with a 2'-deoxyribonucleoside 5'-triphosphate. An Omega-N-methylarginine; by PRMT6 modification is found at arginine 152. A 2'-deoxyribonucleoside 5'-triphosphate-binding residues include serine 180, arginine 183, glycine 189, and aspartate 190. The interval 183–192 is DNA-binding; the sequence is RGAESSGDMD. Residues aspartate 190, aspartate 192, and aspartate 256 each contribute to the Mg(2+) site.

The protein belongs to the DNA polymerase type-X family. Monomer. Binds single-stranded DNA (ssDNA). Interacts with APEX1, LIG1, LIG3, FEN1, PCNA and XRCC1. Interacts with HUWE1/ARF-BP1, STUB1/CHIP and USP47. Interacts with FAM168A. Mg(2+) serves as cofactor. In terms of processing, methylation by PRMT6 stimulates the polymerase activity by enhancing DNA binding and processivity. Post-translationally, ubiquitinated at Lys-41, Lys-61 and Lys-81: monoubiquitinated by HUWE1/ARF-BP1. Monoubiquitinated protein is then the target of STUB1/CHIP, which catalyzes polyubiquitination from monoubiquitin, leading to degradation by the proteasome. USP47 mediates the deubiquitination of monoubiquitinated protein, preventing polyubiquitination by STUB1/CHIP and its subsequent degradation.

Its subcellular location is the nucleus. The protein localises to the cytoplasm. The catalysed reaction is DNA(n) + a 2'-deoxyribonucleoside 5'-triphosphate = DNA(n+1) + diphosphate. It catalyses the reaction a 5'-end 2'-deoxyribose-2'-deoxyribonucleotide-DNA = (2E,4S)-4-hydroxypenten-2-al-5-phosphate + a 5'-end 5'-phospho-2'-deoxyribonucleoside-DNA + H(+). The enzyme catalyses 2'-deoxyribonucleotide-(2'-deoxyribose 5'-phosphate)-2'-deoxyribonucleotide-DNA = a 3'-end 2'-deoxyribonucleotide-(2,3-dehydro-2,3-deoxyribose 5'-phosphate)-DNA + a 5'-end 5'-phospho-2'-deoxyribonucleoside-DNA + H(+). Its function is as follows. Repair polymerase that plays a key role in base-excision repair. During this process, the damaged base is excised by specific DNA glycosylases, the DNA backbone is nicked at the abasic site by an apurinic/apyrimidic (AP) endonuclease, and POLB removes 5'-deoxyribose-phosphate from the preincised AP site acting as a 5'-deoxyribose-phosphate lyase (5'-dRP lyase); through its DNA polymerase activity, it adds one nucleotide to the 3' end of the arising single-nucleotide gap. Conducts 'gap-filling' DNA synthesis in a stepwise distributive fashion rather than in a processive fashion as for other DNA polymerases. It is also able to cleave sugar-phosphate bonds 3' to an intact AP site, acting as an AP lyase. The chain is DNA polymerase beta (Polb) from Rattus norvegicus (Rat).